Consider the following 189-residue polypeptide: MNGLPSTEAPGGAGCALAGLPPLPRGLSGLLNASGGSWRELERVYSQRSRIHDELSRAARAPDGPRHAAGSANLGSAAGPRRPVNLDSALAALRKEMVGLRQLDMSLLCQLWGLYESIQDYKHLCQDLSLCQDLSSSLHSDSSYPPDAGLSDDDEPPDASLPPDPPPLTVPQTHNARDQWLQDAFQISL.

S28 is modified (phosphoserine). The disordered stretch occupies residues 55–81; that stretch reads LSRAARAPDGPRHAAGSANLGSAAGPR. Over residues 68-79 the composition is skewed to low complexity; the sequence is AAGSANLGSAAG. An LRR repeat occupies 86–114; sequence LDSALAALRKEMVGLRQLDMSLLCQLWGL. The interval 141-174 is disordered; that stretch reads DSSYPPDAGLSDDDEPPDASLPPDPPPLTVPQTH. The span at 159 to 169 shows a compositional bias: pro residues; it reads ASLPPDPPPLT. The residue at position 188 (S188) is a Phosphoserine.

It belongs to the FAM89 family. In terms of assembly, interacts with SKI. Interacts (via LRR repeat) with CDC42BPA (via AGC-kinase C-terminal domain) and CDC42BPB (via AGC-kinase C-terminal domain). Interacts (via LRR repeat) with LIMK1 (via LIM zinc-binding domains). Forms a tripartite complex with CDC42BPA, CDC42BPB and LIMK1.

The protein localises to the cytoplasm. It localises to the cell projection. The protein resides in the lamellipodium. Functionally, negatively regulates TGF-beta-induced signaling; in cooperation with SKI prevents the translocation of SMAD2 from the nucleus to the cytoplasm in response to TGF-beta. Acts as an adapter that mediates the specific recognition of LIMK1 by CDC42BPA and CDC42BPB in the lamellipodia. LRAP25-mediated CDC42BPA/CDC42BPB targeting to LIMK1 and the lamellipodium results in LIMK1 activation and the subsequent phosphorylation of CFL1 which is important for lamellipodial F-actin regulation. The protein is Leucine repeat adapter protein 25 of Rattus norvegicus (Rat).